Consider the following 508-residue polypeptide: Photosystem II CP47 reaction center protein (508 aa).

A run of 6 helical transmembrane segments spans residues 21–36 (AVHI…WAGS), 101–115 (ILFS…IWHW), 140–156 (GIHL…FGAF), 203–218 (IAAG…FHLS), 237–252 (VLSS…AFVV), and 457–472 (SFAL…HGAR).

Belongs to the PsbB/PsbC family. PsbB subfamily. As to quaternary structure, PSII is composed of 1 copy each of membrane proteins PsbA, PsbB, PsbC, PsbD, PsbE, PsbF, PsbH, PsbI, PsbJ, PsbK, PsbL, PsbM, PsbT, PsbX, PsbY, PsbZ, Psb30/Ycf12, at least 3 peripheral proteins of the oxygen-evolving complex and a large number of cofactors. It forms dimeric complexes. The cofactor is Binds multiple chlorophylls. PSII binds additional chlorophylls, carotenoids and specific lipids..

Its subcellular location is the plastid. It localises to the chloroplast thylakoid membrane. One of the components of the core complex of photosystem II (PSII). It binds chlorophyll and helps catalyze the primary light-induced photochemical processes of PSII. PSII is a light-driven water:plastoquinone oxidoreductase, using light energy to abstract electrons from H(2)O, generating O(2) and a proton gradient subsequently used for ATP formation. This is Photosystem II CP47 reaction center protein from Oenothera argillicola (Appalachian evening primrose).